We begin with the raw amino-acid sequence, 1135 residues long: DNA-directed RNA polymerase I subunit RPA2 (1135 aa).

A disordered region spans residues 1–24 (MDPGSRWRNLPSGPSLKHLTDPSY). Arginine 180 is an RNA binding site. A loop B region spans residues 194–208 (IRPKWKTRGPGYTQY). Residues 236–247 (LNFIYRKELFFL) are loop A. Aspartate 367 contributes to the RNA binding site. 2 fork loop regions span residues 439–453 (LRSK…DSGL) and 474–489 (RGAD…VRRL). A Mg(2+)-binding site is contributed by aspartate 755. Lysine 890 lines the RNA pocket. Positions 1020 and 1036 each coordinate DNA. Residue serine 1051 is modified to Phosphoserine. Zn(2+)-binding residues include cysteine 1070, cysteine 1073, cysteine 1098, and cysteine 1101. The C4-type zinc-finger motif lies at 1070–1101 (CVKCGSLLSPLLEKPPPSWSAMRNRKYNCTLC).

The protein belongs to the RNA polymerase beta chain family. In terms of assembly, component of the RNA polymerase I (Pol I) complex consisting of 13 subunits: a ten-subunit catalytic core composed of POLR1A/RPA1, POLR1B/RPA2, POLR1C/RPAC1, POLR1D/RPAC2, POLR1H/RPA12, POLR2E/RPABC1, POLR2F/RPABC2, POLR2H/RPABC3, POLR2K/RPABC4 and POLR2L/RPABC5; a mobile stalk subunit POLR1F/RPA43 protruding from the core and additional subunits homologous to general transcription factors POLR1E/RPA49 and POLR1G/RPA34. Part of Pol I pre-initiation complex (PIC), in which Pol I core assembles with RRN3 and promoter-bound UTBF and SL1/TIF-IB complex. It depends on Mg(2+) as a cofactor.

It is found in the nucleus. It localises to the nucleolus. The protein resides in the chromosome. The catalysed reaction is RNA(n) + a ribonucleoside 5'-triphosphate = RNA(n+1) + diphosphate. Functionally, catalytic core component of RNA polymerase I (Pol I), a DNA-dependent RNA polymerase which synthesizes ribosomal RNA precursors using the four ribonucleoside triphosphates as substrates. Transcribes 47S pre-rRNAs from multicopy rRNA gene clusters, giving rise to 5.8S, 18S and 28S ribosomal RNAs. Pol I-mediated transcription cycle proceeds through transcription initiation, transcription elongation and transcription termination stages. During transcription initiation, Pol I pre-initiation complex (PIC) is recruited by the selectivity factor 1 (SL1/TIF-IB) complex bound to the core promoter that precedes an rDNA repeat unit. The PIC assembly bends the promoter favoring the formation of the transcription bubble and promoter escape. Once the polymerase has escaped from the promoter it enters the elongation phase during which RNA is actively polymerized, based on complementarity with the template DNA strand. Highly processive, assembles in structures referred to as 'Miller trees' where many elongating Pol I complexes queue and transcribe the same rDNA coding regions. At terminator sequences downstream of the rDNA gene, PTRF interacts with Pol I and halts Pol I transcription leading to the release of the RNA transcript and polymerase from the DNA. Forms Pol I active center together with the largest subunit POLR1A/RPA1. Appends one nucleotide at a time to the 3' end of the nascent RNA, with POLR1A/RPA1 contributing a Mg(2+)-coordinating DxDGD motif, and POLR1B/RPA2 participating in the coordination of a second Mg(2+) ion and providing lysine residues believed to facilitate Watson-Crick base pairing between the incoming nucleotide and the template base. Typically, Mg(2+) ions direct a 5' nucleoside triphosphate to form a phosphodiester bond with the 3' hydroxyl of the preceding nucleotide of the nascent RNA, with the elimination of pyrophosphate. Has proofreading activity: Pauses and backtracks to allow the cleavage of a missincorporated nucleotide via POLR1H/RPA12. High Pol I processivity is associated with decreased transcription fidelity. The sequence is that of DNA-directed RNA polymerase I subunit RPA2 from Homo sapiens (Human).